Consider the following 462-residue polypeptide: Hydroxymethylglutaryl-CoA synthase (462 aa).

Catalysis depends on E92, which acts as the Proton donor/acceptor. The Acyl-thioester intermediate role is filled by C124. 7 residues coordinate (3S)-3-hydroxy-3-methylglutaryl-CoA: C124, T167, S219, H257, K266, N327, and S360. Catalysis depends on H257, which acts as the Proton donor/acceptor. K408 is covalently cross-linked (Glycyl lysine isopeptide (Lys-Gly) (interchain with G-Cter in SUMO)).

It belongs to the thiolase-like superfamily. HMG-CoA synthase family. In terms of processing, ubiquitinated.

It catalyses the reaction acetoacetyl-CoA + acetyl-CoA + H2O = (3S)-3-hydroxy-3-methylglutaryl-CoA + CoA + H(+). The protein operates within metabolic intermediate biosynthesis; (R)-mevalonate biosynthesis; (R)-mevalonate from acetyl-CoA: step 2/3. This enzyme condenses acetyl-CoA with acetoacetyl-CoA to form HMG-CoA, which is the substrate for HMG-CoA reductase. This Caenorhabditis elegans protein is Hydroxymethylglutaryl-CoA synthase.